Here is a 192-residue protein sequence, read N- to C-terminus: Epididymal-specific lipocalin-12 (192 aa).

The N-terminal stretch at 1–19 (MRLLCGLWLWLSLLKVLQA) is a signal peptide. An intrachain disulfide couples Cys-88 to Cys-192.

This sequence belongs to the calycin superfamily. Lipocalin family. Monomer.

It is found in the secreted. In terms of biological role, binds all-trans retinoic acid and may act as a retinoid carrier protein within the epididymis. May play a role in male fertility. The chain is Epididymal-specific lipocalin-12 (LCN12) from Homo sapiens (Human).